We begin with the raw amino-acid sequence, 465 residues long: uncharacterized protein (465 aa).

3 disordered regions span residues 1 to 55 (MNSS…SSHQ), 70 to 164 (DFSE…VEGQ), and 221 to 313 (TTDN…KQRV). Residues 40–50 (ENYKDNSDHSN) show a composition bias toward basic and acidic residues. The span at 73-82 (ESFNDNQNLK) shows a compositional bias: polar residues. The span at 83 to 134 (NFNTTDNNFNDDYNNDYDSNNDSNNDSNNDSNNDYDNESNNYFNNDSNNDSN) shows a compositional bias: low complexity. The segment covering 141 to 150 (ETTKHKLPIE) has biased composition (basic and acidic residues). Low complexity predominate over residues 221 to 235 (TTDNQSNTESSQENN). Composition is skewed to basic and acidic residues over residues 236–249 (VIKKEPNNKLDKQP) and 259–275 (IVPKQETDKKSPVKSIK). Positions 288–306 (IDQSNKLGKSYNTNNNNSK) are enriched in polar residues. Residues 390 to 423 (NKASIAELKKMRLEQRKREIEEKRRQVENKKPDS) are a coiled coil.

This is an uncharacterized protein from Acanthamoeba polyphaga mimivirus (APMV).